Consider the following 183-residue polypeptide: MSINLNQIKQDLTQITNDVLTAANLRRGDIFVLGCSTSEVVGGHIGKASSREVGATIIETLLEILKPLDIQLAVQGCEHINRSLVMERSVAEAHDFEIVSVVPAMHAGGACSVAAFEQYSDPVEVEHTVAHAGLDIGDTAIGMHVKFVQVPVRPSLDTLGAAHVTALRSRPKYVGGPRATYDI.

It belongs to the UPF0340 family.

The protein is UPF0340 protein LCA_1354 of Latilactobacillus sakei subsp. sakei (strain 23K) (Lactobacillus sakei subsp. sakei).